Reading from the N-terminus, the 201-residue chain is IDLSRF-like peptide (201 aa).

Residues 1–28 (MVRRFCNGAVALGIALTACAAFPRAIMA) form the signal peptide. Residues 43-201 (SDACHPYEPF…EKLVKTGFLD (159 aa)) constitute a propeptide that is removed on maturation. The LDL-receptor class A domain maps to 45–85 (ACHPYEPFKCPGDGLCISIQYLCDGAPDCQDGYDEDSRLCT). Cystine bridges form between cysteine 46-cysteine 60, cysteine 54-cysteine 73, and cysteine 67-cysteine 84.

Expressed in central brain, antennal and optical lobes, in gnathal, thoracic and abdominal ganglia and in the retrocerebral complex (at protein level).

It localises to the secreted. The sequence is that of IDLSRF-like peptide from Camponotus floridanus (Florida carpenter ant).